The chain runs to 136 residues: Probable 5-hydroxyisourate hydrolase ZK697.8 (136 aa).

An N-terminal signal peptide occupies residues 1 to 19 (MIKFLLFLAIAAATVISNA). Substrate is bound by residues H31, R69, and Y133.

It belongs to the transthyretin family. 5-hydroxyisourate hydrolase subfamily. In terms of assembly, homotetramer.

It catalyses the reaction 5-hydroxyisourate + H2O = 5-hydroxy-2-oxo-4-ureido-2,5-dihydro-1H-imidazole-5-carboxylate + H(+). In terms of biological role, catalyzes the hydrolysis of 5-hydroxyisourate (HIU) to 2-oxo-4-hydroxy-4-carboxy-5-ureidoimidazoline (OHCU). The chain is Probable 5-hydroxyisourate hydrolase ZK697.8 from Caenorhabditis elegans.